The sequence spans 343 residues: Protein RecA (343 aa).

64–71 (GPESSGKT) lines the ATP pocket.

Belongs to the RecA family.

The protein resides in the cytoplasm. Can catalyze the hydrolysis of ATP in the presence of single-stranded DNA, the ATP-dependent uptake of single-stranded DNA by duplex DNA, and the ATP-dependent hybridization of homologous single-stranded DNAs. It interacts with LexA causing its activation and leading to its autocatalytic cleavage. This chain is Protein RecA, found in Acidiphilium cryptum (strain JF-5).